A 266-amino-acid chain; its full sequence is Cytochrome c oxidase subunit 2 (266 aa).

At 1–43 (MTITNYINNQFTFLDMAEPWQLGFQDPATPVMEGIINFHHDLM) the chain is on the mitochondrial intermembrane side. The helical transmembrane segment at 44 to 64 (FFLISIVVFVCWMLFRVITLF) threads the bilayer. Residues 65 to 82 (DEKKNKIPATVVHGATIE) lie on the Mitochondrial matrix side of the membrane. Residues 83-103 (IIWTSIPALILLTVAVPSFAL) form a helical membrane-spanning segment. Residues 104 to 266 (LYSMDEVIDP…NVXLIKFYGI (163 aa)) lie on the Mitochondrial intermembrane side of the membrane. The Cu cation site is built by His186, Cys221, Glu223, Cys225, His229, and Met232. Glu223 is a binding site for Mg(2+).

The protein belongs to the cytochrome c oxidase subunit 2 family. In terms of assembly, component of the cytochrome c oxidase (complex IV, CIV), a multisubunit enzyme composed of a catalytic core of 3 subunits and several supernumerary subunits. The complex exists as a monomer or a dimer and forms supercomplexes (SCs) in the inner mitochondrial membrane with ubiquinol-cytochrome c oxidoreductase (cytochrome b-c1 complex, complex III, CIII). Cu cation is required as a cofactor.

It is found in the mitochondrion inner membrane. It carries out the reaction 4 Fe(II)-[cytochrome c] + O2 + 8 H(+)(in) = 4 Fe(III)-[cytochrome c] + 2 H2O + 4 H(+)(out). Functionally, component of the cytochrome c oxidase, the last enzyme in the mitochondrial electron transport chain which drives oxidative phosphorylation. The respiratory chain contains 3 multisubunit complexes succinate dehydrogenase (complex II, CII), ubiquinol-cytochrome c oxidoreductase (cytochrome b-c1 complex, complex III, CIII) and cytochrome c oxidase (complex IV, CIV), that cooperate to transfer electrons derived from NADH and succinate to molecular oxygen, creating an electrochemical gradient over the inner membrane that drives transmembrane transport and the ATP synthase. Cytochrome c oxidase is the component of the respiratory chain that catalyzes the reduction of oxygen to water. Electrons originating from reduced cytochrome c in the intermembrane space (IMS) are transferred via the dinuclear copper A center (CU(A)) of subunit 2 and heme A of subunit 1 to the active site in subunit 1, a binuclear center (BNC) formed by heme A3 and copper B (CU(B)). The BNC reduces molecular oxygen to 2 water molecules using 4 electrons from cytochrome c in the IMS and 4 protons from the mitochondrial matrix. This Phytophthora megasperma (Potato pink rot fungus) protein is Cytochrome c oxidase subunit 2 (COX2).